A 65-amino-acid chain; its full sequence is Neurotoxin Bot2 (65 aa).

Residues 2–64 (RDAYIAQPEN…VPIRIEGKCH (63 aa)) form the LCN-type CS-alpha/beta domain. 4 disulfides stabilise this stretch: cysteine 12–cysteine 63, cysteine 16–cysteine 36, cysteine 22–cysteine 46, and cysteine 26–cysteine 48. Phenylalanine 65 is subject to Phenylalanine amide.

This sequence belongs to the long (4 C-C) scorpion toxin superfamily. Sodium channel inhibitor family. Alpha subfamily. In terms of tissue distribution, expressed by the venom gland.

It localises to the secreted. Its function is as follows. Binds to sodium channels (Nav) and inhibits the inactivation of the activated channels, thereby blocking neuronal transmission. This chain is Neurotoxin Bot2, found in Buthus occitanus tunetanus (Common European scorpion).